A 54-amino-acid chain; its full sequence is ComX pheromone (54 aa).

Residues Met-1–Tyr-46 constitute a propeptide that is removed on maturation. Residue Trp-51 is the site of 3'-geranyl-2',N2-cyclotryptophan attachment.

As to quaternary structure, interacts directly with the sensor histidine kinase ComP and stimulates its activity. Trp-51 is modified by isoprenylation, probably by geranylation, which is essential for activity. Modified by the tryptophan prenyltransferase ComQ before export to the extracellular environment. The type of isoprenyl derivative differs among the different pherotypes and depends on ComX primary sequence.

Its subcellular location is the secreted. Part of a major quorum-sensing system that regulates the development of genetic competence. Acts through the activation of the two-component regulatory system ComP/ComA composed of a sensor histidine kinase, ComP, and a response regulator, ComA. In Bacillus mojavensis, this protein is ComX pheromone.